Consider the following 494-residue polypeptide: MANYFNTLNLREQLDQLGRCRFMDREEFVSEADYLKGKKVVIVGCGAQGLNQGLNMRDSGLDVSYALRQAAIDEQRQSFKNAKDNGFEVGSYETLIPQADLVVNLTPDKQHTNVVETVMPLMKEGAALGYSHGFNVVEEGMQIRKDLTVVMVAPKCPGTEVREEYKRGFGVPTLIAVHPENDPKGEGWDIAKAWAAATGGHRAGCLESSFVAEVKSDLMGEQTILCGMLQAGSIVCYEKMIAEGIDPGYAGKLLQYGWETITEALKFGGITHMMDRLSNPAKIKAFELSEELKDLMRPLYNKHMDDIISGHFSSTMMADWANDDKNLLGWRAETGETAFENYPETDVEISEQEYFDNGILMVAMVRAGVELAFEAMTASGIIDESAYYESLHELPLIANTIARKRLYEMNVVISDTAEYGNYLFANVATPLLREKFMPSVGTDVIGKGLGETSNQVDNATLIAVNETIRNHPVEYIGEELRGYMTDMKRIAVGG.

Residues 14–208 (LDQLGRCRFM…GGHRAGCLES (195 aa)) enclose the KARI N-terminal Rossmann domain. Residues 45 to 48 (CGAQ), R68, R76, S78, and 108 to 110 (DKQ) each bind NADP(+). The active site involves H132. G158 is an NADP(+) binding site. 2 consecutive KARI C-terminal knotted domains span residues 209–344 (SFVA…NYPE) and 345–487 (TDVE…MTDM). Mg(2+) contacts are provided by D217, E221, E389, and E393. Position 414 (S414) interacts with substrate.

The protein belongs to the ketol-acid reductoisomerase family. Mg(2+) serves as cofactor.

It carries out the reaction (2R)-2,3-dihydroxy-3-methylbutanoate + NADP(+) = (2S)-2-acetolactate + NADPH + H(+). The enzyme catalyses (2R,3R)-2,3-dihydroxy-3-methylpentanoate + NADP(+) = (S)-2-ethyl-2-hydroxy-3-oxobutanoate + NADPH + H(+). Its pathway is amino-acid biosynthesis; L-isoleucine biosynthesis; L-isoleucine from 2-oxobutanoate: step 2/4. It participates in amino-acid biosynthesis; L-valine biosynthesis; L-valine from pyruvate: step 2/4. In terms of biological role, involved in the biosynthesis of branched-chain amino acids (BCAA). Catalyzes an alkyl-migration followed by a ketol-acid reduction of (S)-2-acetolactate (S2AL) to yield (R)-2,3-dihydroxy-isovalerate. In the isomerase reaction, S2AL is rearranged via a Mg-dependent methyl migration to produce 3-hydroxy-3-methyl-2-ketobutyrate (HMKB). In the reductase reaction, this 2-ketoacid undergoes a metal-dependent reduction by NADPH to yield (R)-2,3-dihydroxy-isovalerate. The protein is Ketol-acid reductoisomerase (NADP(+)) of Vibrio parahaemolyticus serotype O3:K6 (strain RIMD 2210633).